We begin with the raw amino-acid sequence, 393 residues long: uncharacterized protein (393 aa).

One can recognise an OBG-type G domain in the interval Ala2–Lys266. GTP is bound by residues Gly8 to Ser15 and Asp78 to Leu82. The TGS domain maps to Asp314–Ser390.

The protein belongs to the TRAFAC class OBG-HflX-like GTPase superfamily. OBG GTPase family.

This is an uncharacterized protein from Methanocaldococcus jannaschii (strain ATCC 43067 / DSM 2661 / JAL-1 / JCM 10045 / NBRC 100440) (Methanococcus jannaschii).